The sequence spans 444 residues: MNRILRISETHPLTWRLRDDQKTVWIKEYCDKNGYLSLKKALKEMLPEDVINIVKESGLKGRGGAGFSTGLKWSLMSQNHSYTRERGYLICNADEMEPGTYKDRLLIEKIPHQLIEGIILSAYALNVSRAYIFLRGEYVQAEHILKQSIQEAINFGFIGLNILGSNFNIELVLHTGAGRYICGEETALINSLEGRRANPRSKPPFPAVFGLWGKPTCVNNVETLSNVPCIILNGVSWYKNLSKSSDTGTKLMGFSGNVRNPGVWELPFGTTAREILEDYAHGMKSGFSLKAWQPGGAGTDFLLEEHLDLPMDFKNISQAGSRLGTALSMAVDNKTSMVSLVYNIEKFFSRESCGLCTPCRDGLPWIVKILKSLEQNKGHKNDVKNLEKLCSHLSPGKTFCAHAPGAIEPLQSAIKYFRSEFESGINIRKRDLNKKIIGIQSNCI.

Residue 61-70 (GRGGAGFSTG) coordinates NAD(+). Residue 176-223 (GAGRYICGEETALINSLEGRRANPRSKPPFPAVFGLWGKPTCVNNVET) participates in FMN binding. Positions 353, 356, 359, and 400 each coordinate [4Fe-4S] cluster.

This sequence belongs to the complex I 51 kDa subunit family. In terms of assembly, composed of 13 different subunits. Subunits NuoCD, E, F, and G constitute the peripheral sector of the complex. Requires FMN as cofactor. [4Fe-4S] cluster serves as cofactor.

It carries out the reaction a quinone + NADH + 5 H(+)(in) = a quinol + NAD(+) + 4 H(+)(out). In terms of biological role, NDH-1 shuttles electrons from NADH, via FMN and iron-sulfur (Fe-S) centers, to quinones in the respiratory chain. Couples the redox reaction to proton translocation (for every two electrons transferred, four hydrogen ions are translocated across the cytoplasmic membrane), and thus conserves the redox energy in a proton gradient. The polypeptide is NADH-quinone oxidoreductase subunit F (nuoF) (Buchnera aphidicola subsp. Acyrthosiphon pisum (strain APS) (Acyrthosiphon pisum symbiotic bacterium)).